The following is a 452-amino-acid chain: Aspartyl/glutamyl-tRNA(Asn/Gln) amidotransferase subunit B (452 aa).

This sequence belongs to the GatB/GatE family. GatB subfamily. Heterotrimer of A, B and C subunits.

The catalysed reaction is L-glutamyl-tRNA(Gln) + L-glutamine + ATP + H2O = L-glutaminyl-tRNA(Gln) + L-glutamate + ADP + phosphate + H(+). It catalyses the reaction L-aspartyl-tRNA(Asn) + L-glutamine + ATP + H2O = L-asparaginyl-tRNA(Asn) + L-glutamate + ADP + phosphate + 2 H(+). Its function is as follows. Allows the formation of correctly charged Asn-tRNA(Asn) or Gln-tRNA(Gln) through the transamidation of misacylated Asp-tRNA(Asn) or Glu-tRNA(Gln) in organisms which lack either or both of asparaginyl-tRNA or glutaminyl-tRNA synthetases. The reaction takes place in the presence of glutamine and ATP through an activated phospho-Asp-tRNA(Asn) or phospho-Glu-tRNA(Gln). The polypeptide is Aspartyl/glutamyl-tRNA(Asn/Gln) amidotransferase subunit B (Methanosphaera stadtmanae (strain ATCC 43021 / DSM 3091 / JCM 11832 / MCB-3)).